Reading from the N-terminus, the 202-residue chain is IMP cyclohydrolase (202 aa).

This sequence belongs to the archaeal IMP cyclohydrolase family.

The catalysed reaction is IMP + H2O = 5-formamido-1-(5-phospho-D-ribosyl)imidazole-4-carboxamide. It participates in purine metabolism; IMP biosynthesis via de novo pathway; IMP from 5-formamido-1-(5-phospho-D-ribosyl)imidazole-4-carboxamide: step 1/1. Functionally, catalyzes the cyclization of 5-formylamidoimidazole-4-carboxamide ribonucleotide to IMP. This Methanocaldococcus jannaschii (strain ATCC 43067 / DSM 2661 / JAL-1 / JCM 10045 / NBRC 100440) (Methanococcus jannaschii) protein is IMP cyclohydrolase (purO).